The chain runs to 152 residues: Interleukin-3 (152 aa).

A signal peptide spans 1-19; it reads MSRLPVLLLLQLLVRPGLQ. 2 N-linked (GlcNAc...) asparagine glycosylation sites follow: N34 and N89. A disulfide bridge links C35 with C103.

This sequence belongs to the IL-3 family. In terms of assembly, interacts with IL3RA. As to expression, activated T-cells, mast cells, natural killer cells.

Its subcellular location is the secreted. Cytokine secreted predominantly by activated T-lymphocytes as well as mast cells and osteoblastic cells that controls the production and differentiation of hematopoietic progenitor cells into lineage-restricted cells. Also stimulates mature basophils, eosinophils, and monocytes to become functionally activated. In addition, plays an important role in neural cell proliferation and survival. Participates as well in bone homeostasis and inhibits osteoclast differentiation by preventing NF-kappa-B nuclear translocation and activation. Mechanistically, exerts its biological effects through a receptor composed of IL3RA subunit and a signal transducing subunit IL3RB. Receptor stimulation results in the rapid activation of JAK2 kinase activity leading to STAT5-mediated transcriptional program. Alternatively, contributes to cell survival under oxidative stress in non-hematopoietic systems by activating pathways mediated by PI3K/AKT and ERK. The polypeptide is Interleukin-3 (Homo sapiens (Human)).